Here is a 230-residue protein sequence, read N- to C-terminus: Uracil-DNA glycosylase (230 aa).

The active-site Proton acceptor is the Asp-70.

This sequence belongs to the uracil-DNA glycosylase (UDG) superfamily. UNG family.

It localises to the cytoplasm. It carries out the reaction Hydrolyzes single-stranded DNA or mismatched double-stranded DNA and polynucleotides, releasing free uracil.. Functionally, excises uracil residues from the DNA which can arise as a result of misincorporation of dUMP residues by DNA polymerase or due to deamination of cytosine. This Pseudomonas putida (strain GB-1) protein is Uracil-DNA glycosylase.